The primary structure comprises 269 residues: uncharacterized protein (269 aa).

5 helical membrane-spanning segments follow: residues 65–85 (FSLFLTIVMIINLLFGSLFVM), 156–176 (VTSVLLAACRVCLNLMLISMV), 182–202 (YTRILLCIISYGMMIFVWLGF), 206–226 (MMSFMLATWLFAYNIVLNDFW), and 242–262 (TLSAIGGLLLLIHTGPGEFSF). A Di-lysine motif motif is present at residues 266-269 (KKKW).

This sequence belongs to the SURF4 family.

The protein resides in the membrane. This is an uncharacterized protein from Caenorhabditis elegans.